Here is a 448-residue protein sequence, read N- to C-terminus: Cysteine--tRNA ligase (448 aa).

Cysteine 27 is a Zn(2+) binding site. A 'HIGH' region motif is present at residues proline 29–asparagine 39. Positions 210, 235, and 239 each coordinate Zn(2+). Positions lysine 267–serine 271 match the 'KMSKS' region motif. Lysine 270 serves as a coordination point for ATP.

The protein belongs to the class-I aminoacyl-tRNA synthetase family. In terms of assembly, monomer. It depends on Zn(2+) as a cofactor.

The protein localises to the cytoplasm. The catalysed reaction is tRNA(Cys) + L-cysteine + ATP = L-cysteinyl-tRNA(Cys) + AMP + diphosphate. This is Cysteine--tRNA ligase from Lactococcus lactis subsp. cremoris (strain MG1363).